Consider the following 376-residue polypeptide: Chaperone protein DnaJ (376 aa).

A J domain is found at 5–70 (DYYEVLGVGR…DKKAAYDQFG (66 aa)). The CR-type zinc-finger motif lies at 132-210 (GLTKELRIPT…CHGEGRVEKS (79 aa)). 8 residues coordinate Zn(2+): cysteine 145, cysteine 148, cysteine 162, cysteine 165, cysteine 184, cysteine 187, cysteine 198, and cysteine 201. CXXCXGXG motif repeat units follow at residues 145-152 (CDLCDGSG), 162-169 (CGTCHGQG), 184-191 (CPTCHGRG), and 198-205 (CGKCHGEG).

Belongs to the DnaJ family. Homodimer. It depends on Zn(2+) as a cofactor.

The protein localises to the cytoplasm. Functionally, participates actively in the response to hyperosmotic and heat shock by preventing the aggregation of stress-denatured proteins and by disaggregating proteins, also in an autonomous, DnaK-independent fashion. Unfolded proteins bind initially to DnaJ; upon interaction with the DnaJ-bound protein, DnaK hydrolyzes its bound ATP, resulting in the formation of a stable complex. GrpE releases ADP from DnaK; ATP binding to DnaK triggers the release of the substrate protein, thus completing the reaction cycle. Several rounds of ATP-dependent interactions between DnaJ, DnaK and GrpE are required for fully efficient folding. Also involved, together with DnaK and GrpE, in the DNA replication of plasmids through activation of initiation proteins. The chain is Chaperone protein DnaJ from Shewanella frigidimarina (strain NCIMB 400).